We begin with the raw amino-acid sequence, 1379 residues long: DNA-directed RNA polymerase subunit beta (1379 aa).

Belongs to the RNA polymerase beta chain family. The RNAP catalytic core consists of 2 alpha, 1 beta, 1 beta' and 1 omega subunit. When a sigma factor is associated with the core the holoenzyme is formed, which can initiate transcription.

The catalysed reaction is RNA(n) + a ribonucleoside 5'-triphosphate = RNA(n+1) + diphosphate. Functionally, DNA-dependent RNA polymerase catalyzes the transcription of DNA into RNA using the four ribonucleoside triphosphates as substrates. In Campylobacter fetus subsp. fetus (strain 82-40), this protein is DNA-directed RNA polymerase subunit beta.